The following is a 904-amino-acid chain: Envelope glycoprotein (904 aa).

The Extracellular portion of the chain corresponds to 1–726 (MDQDLDGAER…LFDWTSWKDW (726 aa)). Asn-131, Asn-255, Asn-277, Asn-296, Asn-329, Asn-367, Asn-376, Asn-385, Asn-410, Asn-427, Asn-432, Asn-452, Asn-491, Asn-509, and Asn-541 each carry an N-linked (GlcNAc...) asparagine; by host glycan. Residues 556-576 (AVGLAIFLLVLAIMAITSSLV) are fusion peptide. Residues 588 to 638 (AKVVERVVQNVSYIAQTQDQFTHLFRNINNRLNVLHHRVSYLEYVEEIRQK) adopt a coiled-coil conformation. Asn-597 is a glycosylation site (N-linked (GlcNAc...) asparagine; by host). Residues 615–631 (INNRLNVLHHRVSYLEY) are immunosuppression. Asn-663 and Asn-694 each carry an N-linked (GlcNAc...) asparagine; by host glycan. Residues 676 to 712 (DEYDKIEEKILKIRVDWLNSSLSDTQDTFGLETSIFD) adopt a coiled-coil conformation. A helical transmembrane segment spans residues 727–747 (IKIIIVIIVLWLLIKILLGML). The Cytoplasmic portion of the chain corresponds to 748–904 (RSCAKVSQNY…AWYEGLRGSQ (157 aa)). Disordered stretches follow at residues 761–783 (PAEE…PASG) and 862–904 (GGTS…RGSQ). Residues 878 to 887 (WTGSREQNNP) show a composition bias toward polar residues.

As to quaternary structure, the mature envelope protein (Env) consists of a trimer of SU-TM heterodimers attached by non-covalent interactions or by a labile interchain disulfide bond. In terms of processing, specific enzymatic cleavages in vivo yield mature proteins. Envelope glycoproteins are synthesized as an inactive precursor that is N-glycosylated and processed likely by host cell furin or by a furin-like protease in the Golgi to yield the mature SU and TM proteins. The cleavage site between SU and TM requires the minimal sequence [KR]-X-[KR]-R.

Its subcellular location is the virion membrane. It is found in the host cell membrane. The surface protein (SU) attaches the virus to the host cell by binding to its receptor. This interaction triggers the refolding of the transmembrane protein (TM) and is thought to activate its fusogenic potential by unmasking its fusion peptide. Fusion occurs at the host cell plasma membrane. Its function is as follows. The transmembrane protein (TM) acts as a class I viral fusion protein. Under the current model, the protein has at least 3 conformational states: pre-fusion native state, pre-hairpin intermediate state, and post-fusion hairpin state. During viral and target cell membrane fusion, the coiled coil regions (heptad repeats) assume a trimer-of-hairpins structure, positioning the fusion peptide in close proximity to the C-terminal region of the ectodomain. The formation of this structure appears to drive apposition and subsequent fusion of viral and target cell membranes. Membranes fusion leads to delivery of the nucleocapsid into the cytoplasm. In Bovine immunodeficiency virus (strain R29) (BIV), this protein is Envelope glycoprotein (env).